The following is an 865-amino-acid chain: MIKAIIGKIIGTRNDRWIKQYKKKVLAINTLEPTYEKMSDTELQNAFEELKKRVRSVEKDLQEKTLLEVLPESFAITREASKRVLNMCHFDVQLIGGMVLNDGKIAEMKTGEGKTLVATLAVALNAMKGESVYVVTVNDYLAHRDSKEMEPLYHFLGYSVGTITASVRDDDERLEIYSKDIVYGTNNEFGFDYLRDNMKYSLEHKVQKSHAFAIVDEVDSILIDEARTPLIISGPVNRRMENYNKADEVAKSMQVEVDFTIDEKNRAILITEEGIKKAENLFGVDNLYKIENATLSHHLDQALKANYLFFIDKDYIVANNEVVIVDEFTGRLSEGRRFSEGLHQALEAKEGVSIKEESQTLADITFQNYFRMFSKLSGMTGTAQTEATEFLEIYNLEVVSIPTNLAIKRKDLNDLIYKSEKEKFDAVILKIKELHDKGQPVLVGTASIEKSETLHALLKKERIPHTVLNAKQHTKEAEIIKDAGLKGAVTIATNMAGRGVDIKLTDEIKELGGLYIIGTERHESRRIDNQLRGRSGRQGDPGVSQFYLSLEDNLLRIFGSDRIKGVMEKLGLKDGEHIESKLVTRAVENAQKKVENLHFESRKHLLEYDDVANEQRKSVYKFRDELLDVNYDISVKIAENREYALNQIFSKLKAFDNQNLSKEELLGLKNILKEDFNTNIELENLEQADSIENFVAEKLKNDYENKMKALDSEQRSRIERIVYLQILDNAWREHLYTMDNLKTGINLRGYNQKDPLVEYKKESYNLFLELIEDIKVEAIKTFSKIQFENEQDSSDAERYLDNFSEEREHESVTYRHEEALDEDLNAAIKVFSKTPKRNEPCPCGSGKKYKDCCAKSGPKKGLFAK.

ATP contacts are provided by residues glutamine 93, 111–115 (GEGKT), and aspartate 501. Zn(2+) is bound by residues cysteine 841, cysteine 843, cysteine 852, and cysteine 853.

Belongs to the SecA family. As to quaternary structure, monomer and homodimer. Part of the essential Sec protein translocation apparatus which comprises SecA, SecYEG and auxiliary proteins SecDF-YajC and YidC. Zn(2+) serves as cofactor.

The protein localises to the cell inner membrane. It is found in the cytoplasm. The enzyme catalyses ATP + H2O + cellular proteinSide 1 = ADP + phosphate + cellular proteinSide 2.. Functionally, part of the Sec protein translocase complex. Interacts with the SecYEG preprotein conducting channel. Has a central role in coupling the hydrolysis of ATP to the transfer of proteins into and across the cell membrane, serving as an ATP-driven molecular motor driving the stepwise translocation of polypeptide chains across the membrane. The sequence is that of Protein translocase subunit SecA from Helicobacter acinonychis (strain Sheeba).